We begin with the raw amino-acid sequence, 320 residues long: Delta-aminolevulinic acid dehydratase (320 aa).

Zn(2+) is bound by residues C119, C121, and C129. K194 acts as the Schiff-base intermediate with substrate in catalysis. R204 and R216 together coordinate 5-aminolevulinate. E232 is a binding site for Mg(2+). K247 serves as the catalytic Schiff-base intermediate with substrate. A 5-aminolevulinate-binding site is contributed by S273.

This sequence belongs to the ALAD family. In terms of assembly, homooctamer. The cofactor is Zn(2+).

It catalyses the reaction 2 5-aminolevulinate = porphobilinogen + 2 H2O + H(+). Its pathway is porphyrin-containing compound metabolism; protoporphyrin-IX biosynthesis; coproporphyrinogen-III from 5-aminolevulinate: step 1/4. Functionally, catalyzes an early step in the biosynthesis of tetrapyrroles. Binds two molecules of 5-aminolevulinate per subunit, each at a distinct site, and catalyzes their condensation to form porphobilinogen. The polypeptide is Delta-aminolevulinic acid dehydratase (hemB) (Methanothermus sociabilis).